The following is a 173-amino-acid chain: Putative metal-dependent hydrolase BA_2700/GBAA_2700/BAS2515 (173 aa).

The Zn(2+) site is built by H65, H156, and H160.

It belongs to the metal hydrolase YfiT family. In terms of assembly, homodimer. It depends on Zn(2+) as a cofactor.

It localises to the cytoplasm. Functionally, possible metal-dependent hydrolase. The protein is Putative metal-dependent hydrolase BA_2700/GBAA_2700/BAS2515 of Bacillus anthracis.